The following is a 193-amino-acid chain: Flagellin B3 (193 aa).

A propeptide spanning residues 1-12 (MFEFITDEDERG) is cleaved from the precursor.

The protein belongs to the archaeal flagellin family. In terms of processing, glycosylated.

The protein resides in the archaeal flagellum. Functionally, flagellin is the subunit protein which polymerizes to form the filaments of archaeal flagella. The chain is Flagellin B3 (flaB3) from Halobacterium salinarum (strain ATCC 700922 / JCM 11081 / NRC-1) (Halobacterium halobium).